The primary structure comprises 621 residues: tRNA uridine 5-carboxymethylaminomethyl modification enzyme MnmG (621 aa).

17-22 provides a ligand contact to FAD; the sequence is GGGHAG. 276–290 provides a ligand contact to NAD(+); sequence GPRYCPSIEDKIMKF.

The protein belongs to the MnmG family. As to quaternary structure, homodimer. Heterotetramer of two MnmE and two MnmG subunits. Requires FAD as cofactor.

The protein localises to the cytoplasm. Functionally, NAD-binding protein involved in the addition of a carboxymethylaminomethyl (cmnm) group at the wobble position (U34) of certain tRNAs, forming tRNA-cmnm(5)s(2)U34. The protein is tRNA uridine 5-carboxymethylaminomethyl modification enzyme MnmG of Zymomonas mobilis subsp. mobilis (strain ATCC 31821 / ZM4 / CP4).